A 128-amino-acid chain; its full sequence is Large ribosomal subunit protein bL17 (128 aa).

This sequence belongs to the bacterial ribosomal protein bL17 family. Part of the 50S ribosomal subunit. Contacts protein L32.

The polypeptide is Large ribosomal subunit protein bL17 (Streptococcus pyogenes serotype M5 (strain Manfredo)).